A 230-amino-acid polypeptide reads, in one-letter code: Uracil phosphoribosyltransferase (230 aa).

Position 38–42 (38–42 (KGLVK)) interacts with GTP. Residues Arg-87, Arg-112, and 140–148 (DPMIATGST) each bind 5-phospho-alpha-D-ribose 1-diphosphate. Uracil contacts are provided by residues Ile-204 and 209–211 (GDA). Asp-210 lines the 5-phospho-alpha-D-ribose 1-diphosphate pocket.

This sequence belongs to the UPRTase family. The cofactor is Mg(2+).

It catalyses the reaction UMP + diphosphate = 5-phospho-alpha-D-ribose 1-diphosphate + uracil. It functions in the pathway pyrimidine metabolism; UMP biosynthesis via salvage pathway; UMP from uracil: step 1/1. Allosterically activated by GTP. Functionally, catalyzes the conversion of uracil and 5-phospho-alpha-D-ribose 1-diphosphate (PRPP) to UMP and diphosphate. In Thermococcus kodakarensis (strain ATCC BAA-918 / JCM 12380 / KOD1) (Pyrococcus kodakaraensis (strain KOD1)), this protein is Uracil phosphoribosyltransferase.